The following is a 492-amino-acid chain: MADTRRVTDTLRRWAPILKVLAVLWLVLAIFMAIPLLVLIVESEPDALAFGLSIAIVLAAATLSWIVTWRIPVSLKPWQMFVLTTLSWVTISSFASLPLVLGAPQLSLTNAVFESVSAITTTGSTILVHIEDLSDGLKLWRGIMQWLGGIGIIVMGIAILPFLKVGGMRLFHTESSDWSDKVMPRTGGIAKATLSIYCGFTLLAAMAYYLGGMSPLDAVVHAMTSLATGGFANSDASFGAYAEQPQLLWMGSLFMLCGALPFVLYIRFLRGSRMALLRDQQVQGLLLLLLLVILALTIWRVSQGTPAFTSLTQVTFNVVSVVTTTGYASDDYSAWGATAYVAFFYLTFVGGCSGSTSGGMKIFRFQVAMLLLRDQLRYLIHASGVFVSRYNNQPLTDDITRGVVAFSFFFFLTVAGLALGLSLLGLDFTTALSGAATAVANVGPGLGETIGPAGNFAPLPDAAKWLLCVGMLMGRLEILTVLVLLTPMFWRQ.

10 helical membrane passes run 20–40, 47–67, 81–101, 143–163, 196–216, 246–266, 282–302, 334–354, 403–423, and 465–485; these read VLAV…LVLI, ALAF…SWIV, FVLT…PLVL, IMQW…LPFL, IYCG…MSPL, QLLW…VLYI, VQGL…WRVS, AWGA…GCSG, VVAF…GLSL, and WLLC…LVLL.

Belongs to the TrkH potassium transport family.

Its subcellular location is the cell inner membrane. Functionally, medium-affinity potassium transport system. Probably interacts with Trk system potassium uptake protein TrkA. Main K(+) transporter in osmotically adapted cells. This Halomonas elongata (strain ATCC 33173 / DSM 2581 / NBRC 15536 / NCIMB 2198 / 1H9) protein is Trk system potassium uptake protein TrkI (trkI).